Here is a 129-residue protein sequence, read N- to C-terminus: Thioredoxin-like 3-3 (129 aa).

Basic and acidic residues predominate over residues 1–10 (MEEGEAKKTG). A disordered region spans residues 1–30 (MEEGEAKKTGLEGTGLSLPGSSHGNLRSAG). Residues 7 to 129 (KKTGLEGTGL…RLHDRLWLHS (123 aa)) enclose the Thioredoxin domain. A compositionally biased stretch (polar residues) spans 19–30 (PGSSHGNLRSAG). Catalysis depends on nucleophile residues C58 and C61. C58 and C61 are disulfide-bonded.

Belongs to the thioredoxin family.

In terms of biological role, probable thiol-disulfide oxidoreductase that may participate in various redox reactions. The chain is Thioredoxin-like 3-3 from Oryza sativa subsp. japonica (Rice).